The sequence spans 109 residues: UPF0060 membrane protein PA14_21660 (109 aa).

4 helical membrane passes run 5-25, 27-47, 59-79, and 84-104; these read LWFVLAAFCEIAGCYAFYLWL, LGKSALWVLPGLLSLTLFALL, AYAAYGGIYVAASLFWLAFVE, and LWSDWLGVALCVVGASVVLFG.

It belongs to the UPF0060 family.

It localises to the cell inner membrane. This is UPF0060 membrane protein PA14_21660 from Pseudomonas aeruginosa (strain UCBPP-PA14).